A 103-amino-acid chain; its full sequence is UPF0145 protein PBPRB0184 (103 aa).

It belongs to the UPF0145 family.

This chain is UPF0145 protein PBPRB0184, found in Photobacterium profundum (strain SS9).